A 330-amino-acid chain; its full sequence is tRNA U34 carboxymethyltransferase (330 aa).

Residues K91, W105, K110, G130, D152–S154, I181–E182, M196, Y200, and R315 contribute to the carboxy-S-adenosyl-L-methionine site.

It belongs to the class I-like SAM-binding methyltransferase superfamily. CmoB family. As to quaternary structure, homotetramer.

It catalyses the reaction carboxy-S-adenosyl-L-methionine + 5-hydroxyuridine(34) in tRNA = 5-carboxymethoxyuridine(34) in tRNA + S-adenosyl-L-homocysteine + H(+). Catalyzes carboxymethyl transfer from carboxy-S-adenosyl-L-methionine (Cx-SAM) to 5-hydroxyuridine (ho5U) to form 5-carboxymethoxyuridine (cmo5U) at position 34 in tRNAs. The chain is tRNA U34 carboxymethyltransferase from Shewanella halifaxensis (strain HAW-EB4).